A 589-amino-acid polypeptide reads, in one-letter code: Mediator of RNA polymerase II transcription subunit 26 (589 aa).

Positions 10 to 87 constitute a TFIIS N-terminal domain; the sequence is QMRDRLLQAI…RNWQKLIEPG (78 aa). Disordered regions lie at residues 83 to 233, 247 to 320, and 363 to 441; these read LIEP…TKLP, ARVD…DGPS, and LETK…PIPE. Over residues 190–213 the composition is skewed to basic and acidic residues; sequence LLEKDDEVPSDRIRLEHLDNDRHN. Over residues 259-268 the composition is skewed to low complexity; that stretch reads SPRYSSSPRS. Over residues 276 to 297 the composition is skewed to polar residues; sequence KRSTTYAPKGTLSSPSLNSAQV. Composition is skewed to basic and acidic residues over residues 398-412 and 424-435; these read SEDR…RRLT and TPKESHQEEECH.

It belongs to the Mediator complex subunit 26 family. In terms of assembly, component of the Mediator complex.

It is found in the nucleus. Its function is as follows. Component of the Mediator complex, a coactivator involved in the regulated transcription of nearly all RNA polymerase II-dependent genes. Mediator functions as a bridge to convey information from gene-specific regulatory proteins to the basal RNA polymerase II transcription machinery. Mediator is recruited to promoters by direct interactions with regulatory proteins and serves as a scaffold for the assembly of a functional preinitiation complex with RNA polymerase II and the general transcription factors. The polypeptide is Mediator of RNA polymerase II transcription subunit 26 (med26) (Danio rerio (Zebrafish)).